A 232-amino-acid polypeptide reads, in one-letter code: uncharacterized protein (232 aa).

Helical transmembrane passes span 4 to 24 (LLGVFFVPIIPFSFVVDYVFE), 42 to 62 (VLVGALGVGKAGTLLILLAVL), 100 to 120 (LFFISAFAIPLTVIHFLILHM), 145 to 165 (LAFVALVSSLVIAPAYAFFTL), and 171 to 191 (GNLILTPILLIEWLVWLWVGF).

It localises to the cell membrane. This is an uncharacterized protein from Aquifex aeolicus (strain VF5).